The chain runs to 315 residues: Putative steroid dehydrogenase 3 (315 aa).

47–76 provides a ligand contact to NADP(+); the sequence is ASWAVITGGTDGIGKSFSFELAKRGFNIYI. Residue tyrosine 202 is part of the active site.

The protein belongs to the short-chain dehydrogenases/reductases (SDR) family. 17-beta-HSD 3 subfamily.

The chain is Putative steroid dehydrogenase 3 (stdh-3) from Caenorhabditis elegans.